The primary structure comprises 570 residues: Vacuolar protein sorting-associated protein 45 (570 aa).

A phosphoserine mark is found at Ser307 and Ser441.

This sequence belongs to the STXBP/unc-18/SEC1 family. In terms of assembly, interacts with STX6 and ZFYVE20. Ubiquitous; expression was highest in testis and in brain. Detected in every part of the brain.

It is found in the golgi apparatus membrane. It localises to the endosome membrane. In terms of biological role, may play a role in vesicle-mediated protein trafficking from the Golgi stack through the trans-Golgi network. In Rattus norvegicus (Rat), this protein is Vacuolar protein sorting-associated protein 45 (Vps45).